Reading from the N-terminus, the 88-residue chain is Small ribosomal subunit protein bS16c (88 aa).

It belongs to the bacterial ribosomal protein bS16 family.

It is found in the plastid. Its subcellular location is the chloroplast. The chain is Small ribosomal subunit protein bS16c from Sinapis alba (White mustard).